Reading from the N-terminus, the 680-residue chain is Zinc finger protein 263 (680 aa).

Lys-19 participates in a covalent cross-link: Glycyl lysine isopeptide (Lys-Gly) (interchain with G-Cter in SUMO2). One can recognise an SCAN box domain in the interval His-43–Leu-125. Positions Leu-147–Arg-191 are disordered. Lys-159 participates in a covalent cross-link: Glycyl lysine isopeptide (Lys-Gly) (interchain with G-Cter in SUMO2). Residues Ser-168 and Ser-180 each carry the phosphoserine modification. Glycyl lysine isopeptide (Lys-Gly) (interchain with G-Cter in SUMO2) cross-links involve residues Lys-286, Lys-300, and Lys-376. 5 C2H2-type zinc fingers span residues His-378–His-400, His-434–His-456, Phe-462–His-484, Tyr-490–His-512, and Tyr-518–His-540. Residues Lys-570 and Lys-579 each participate in a glycyl lysine isopeptide (Lys-Gly) (interchain with G-Cter in SUMO2) cross-link. 4 C2H2-type zinc fingers span residues Phe-572 to His-594, Tyr-600 to His-622, Tyr-628 to His-650, and Tyr-656 to His-678.

This sequence belongs to the krueppel C2H2-type zinc-finger protein family. In terms of assembly, interacts with a number of proteins involved in chromatin modification and transcriptional corepression including DNMT1, DNMT3A, HDAC2, PHF8, TRIM28/KAP1, SETDB1, EZH2, UHRF1, CBX3/HP1-gamma, and CBX5/HP1-alpha; recruits these proteins to the SIX3 promoter region, leading to SIX3 transcriptional repression. Interacts with MAPK3/ERK1 and MAPK1/ERK2. Ubiquitinated, leading to proteasomal degradation. Expressed in Purkinje cells in the brain (at protein level).

It localises to the nucleus. Transcription factor that binds to the consensus sequence 5'-TCCTCCC-3' and acts as a transcriptional repressor. Binds to the promoter region of SIX3 and recruits other proteins involved in chromatin modification and transcriptional corepression, resulting in methylation of the promoter and transcriptional repression. Acts as a transcriptional repressor of HS3ST1 and HS3ST3A1 via binding to gene promoter regions. The polypeptide is Zinc finger protein 263 (Mus musculus (Mouse)).